A 42-amino-acid chain; its full sequence is Aryl-alcohol dehydrogenase (42 aa).

Belongs to the zinc-containing alcohol dehydrogenase family. As to quaternary structure, homodimer. The cofactor is Zn(2+).

It carries out the reaction an aromatic primary alcohol + NAD(+) = an aromatic aldehyde + NADH + H(+). Functionally, oxidizes primary alcohols with an aromatic or cyclohex-1-ene ring. It is highly specific for benzyl alcohol. In Acinetobacter guillouiae (Acinetobacter genomosp. 11), this protein is Aryl-alcohol dehydrogenase.